The chain runs to 252 residues: Aquaporin TIP1-2 (252 aa).

The Cytoplasmic portion of the chain corresponds to 1–23 (MPIGSIAIGAPGEASHPDTIKAS). A helical membrane pass occupies residues 24-44 (LAEFISTLIFVFAGEGSGMAF). Residues 45–55 (NKLTNDGSTTP) lie on the Vacuolar side of the membrane. The chain crosses the membrane as a helical span at residues 56-76 (AGLVAASLAHGFALFVAVSVG). At 77-103 (ANISGGHVNPAVTFGAFLGGNISLIRG) the chain is on the cytoplasmic side. The NPA 1 signature appears at 85-87 (NPA). A helical transmembrane segment spans residues 104–124 (ILYWIAQLLGSVVACLLLKLA). Topologically, residues 125-143 (TGGLETSAFSLSSDVSVWN) are vacuolar. A helical membrane pass occupies residues 144 to 164 (AVVFEIVMTFGLVYTVYATAV). Residues 165–172 (DPRKGDLG) are Cytoplasmic-facing. A helical membrane pass occupies residues 173-193 (VIAPIAIGFIVGANILAGGAF). Residues 194–219 (DGASMNPAVSFGPAVVSWTWDNHWVY) lie on the Vacuolar side of the membrane. The NPA 2 motif lies at 199-201 (NPA). A helical membrane pass occupies residues 220-240 (WVGPLIGAAIAALVYDGVFIG). At 241-252 (QATHEQLPPSDY) the chain is on the cytoplasmic side.

Belongs to the MIP/aquaporin (TC 1.A.8) family. TIP (TC 1.A.8.10) subfamily. In terms of tissue distribution, mainly expressed in fruits and leaves, and, to a lower extent, in roots, stems and flowers.

It localises to the vacuole membrane. Functionally, water channel required to facilitate the transport of water from the vacuolar compartment to the cytoplasm. The sequence is that of Aquaporin TIP1-2 from Musa acuminata (Banana).